Here is a 50-residue protein sequence, read N- to C-terminus: Large ribosomal subunit protein bL33 (50 aa).

This sequence belongs to the bacterial ribosomal protein bL33 family.

The protein is Large ribosomal subunit protein bL33 of Hydrogenovibrio crunogenus (strain DSM 25203 / XCL-2) (Thiomicrospira crunogena).